A 205-amino-acid polypeptide reads, in one-letter code: Proteasome subunit beta (205 aa).

The propeptide at 1–9 (MNQTENMEG) is removed in mature form; by autocatalysis. T10 acts as the Nucleophile in catalysis.

This sequence belongs to the peptidase T1B family. In terms of assembly, the 20S proteasome core is composed of 14 alpha and 14 beta subunits that assemble into four stacked heptameric rings, resulting in a barrel-shaped structure. The two inner rings, each composed of seven catalytic beta subunits, are sandwiched by two outer rings, each composed of seven alpha subunits. The catalytic chamber with the active sites is on the inside of the barrel. Has a gated structure, the ends of the cylinder being occluded by the N-termini of the alpha-subunits. Is capped at one or both ends by the proteasome regulatory ATPase, PAN.

The protein resides in the cytoplasm. It carries out the reaction Cleavage of peptide bonds with very broad specificity.. With respect to regulation, the formation of the proteasomal ATPase PAN-20S proteasome complex, via the docking of the C-termini of PAN into the intersubunit pockets in the alpha-rings, triggers opening of the gate for substrate entry. Interconversion between the open-gate and close-gate conformations leads to a dynamic regulation of the 20S proteasome proteolysis activity. Its function is as follows. Component of the proteasome core, a large protease complex with broad specificity involved in protein degradation. This chain is Proteasome subunit beta, found in Methanosphaera stadtmanae (strain ATCC 43021 / DSM 3091 / JCM 11832 / MCB-3).